A 118-amino-acid chain; its full sequence is Urease subunit beta (118 aa).

Belongs to the urease beta subunit family. As to quaternary structure, heterotrimer of UreA (gamma), UreB (beta) and UreC (alpha) subunits. Three heterotrimers associate to form the active enzyme.

It is found in the cytoplasm. It catalyses the reaction urea + 2 H2O + H(+) = hydrogencarbonate + 2 NH4(+). The protein operates within nitrogen metabolism; urea degradation; CO(2) and NH(3) from urea (urease route): step 1/1. The chain is Urease subunit beta from Aliivibrio fischeri (strain ATCC 700601 / ES114) (Vibrio fischeri).